The following is a 475-amino-acid chain: UDP-N-acetylmuramate--L-alanine ligase (475 aa).

Residue 112-118 (GTHGKTT) coordinates ATP.

It belongs to the MurCDEF family.

The protein localises to the cytoplasm. It carries out the reaction UDP-N-acetyl-alpha-D-muramate + L-alanine + ATP = UDP-N-acetyl-alpha-D-muramoyl-L-alanine + ADP + phosphate + H(+). It functions in the pathway cell wall biogenesis; peptidoglycan biosynthesis. Its function is as follows. Cell wall formation. The protein is UDP-N-acetylmuramate--L-alanine ligase of Methylobacillus flagellatus (strain ATCC 51484 / DSM 6875 / VKM B-1610 / KT).